Here is a 491-residue protein sequence, read N- to C-terminus: Ketol-acid reductoisomerase (NADP(+)) (491 aa).

Positions alanine 15–serine 208 constitute a KARI N-terminal Rossmann domain. Residues cysteine 45–glutamine 48, arginine 68, arginine 76, serine 78, and aspartate 108–glutamine 110 contribute to the NADP(+) site. Histidine 132 is an active-site residue. Glycine 158 is an NADP(+) binding site. 2 consecutive KARI C-terminal knotted domains span residues serine 209–glutamine 344 and tyrosine 345–methionine 484. Mg(2+) contacts are provided by aspartate 217, glutamate 221, glutamate 389, and glutamate 393. Serine 414 is a binding site for substrate.

This sequence belongs to the ketol-acid reductoisomerase family. The cofactor is Mg(2+).

The catalysed reaction is (2R)-2,3-dihydroxy-3-methylbutanoate + NADP(+) = (2S)-2-acetolactate + NADPH + H(+). It carries out the reaction (2R,3R)-2,3-dihydroxy-3-methylpentanoate + NADP(+) = (S)-2-ethyl-2-hydroxy-3-oxobutanoate + NADPH + H(+). Its pathway is amino-acid biosynthesis; L-isoleucine biosynthesis; L-isoleucine from 2-oxobutanoate: step 2/4. The protein operates within amino-acid biosynthesis; L-valine biosynthesis; L-valine from pyruvate: step 2/4. Its function is as follows. Involved in the biosynthesis of branched-chain amino acids (BCAA). Catalyzes an alkyl-migration followed by a ketol-acid reduction of (S)-2-acetolactate (S2AL) to yield (R)-2,3-dihydroxy-isovalerate. In the isomerase reaction, S2AL is rearranged via a Mg-dependent methyl migration to produce 3-hydroxy-3-methyl-2-ketobutyrate (HMKB). In the reductase reaction, this 2-ketoacid undergoes a metal-dependent reduction by NADPH to yield (R)-2,3-dihydroxy-isovalerate. This is Ketol-acid reductoisomerase (NADP(+)) from Citrobacter koseri (strain ATCC BAA-895 / CDC 4225-83 / SGSC4696).